Consider the following 467-residue polypeptide: ATP synthase subunit beta (467 aa).

ATP is bound at residue 156-163 (GGAGVGKT).

This sequence belongs to the ATPase alpha/beta chains family. As to quaternary structure, F-type ATPases have 2 components, CF(1) - the catalytic core - and CF(0) - the membrane proton channel. CF(1) has five subunits: alpha(3), beta(3), gamma(1), delta(1), epsilon(1). CF(0) has three main subunits: a(1), b(2) and c(9-12). The alpha and beta chains form an alternating ring which encloses part of the gamma chain. CF(1) is attached to CF(0) by a central stalk formed by the gamma and epsilon chains, while a peripheral stalk is formed by the delta and b chains.

The protein localises to the cell inner membrane. It carries out the reaction ATP + H2O + 4 H(+)(in) = ADP + phosphate + 5 H(+)(out). In terms of biological role, produces ATP from ADP in the presence of a proton gradient across the membrane. The catalytic sites are hosted primarily by the beta subunits. This Cupriavidus pinatubonensis (strain JMP 134 / LMG 1197) (Cupriavidus necator (strain JMP 134)) protein is ATP synthase subunit beta.